The following is a 35-amino-acid chain: Toxin Ado1 (35 aa).

Disulfide bonds link Cys5/Cys20, Cys12/Cys25, and Cys19/Cys32.

The protein resides in the secreted. Binds reversibly and blocks P/Q-type voltage-gated calcium channels (Cav). The polypeptide is Toxin Ado1 (Agriosphodrus dohrni (Japanese assassin-bug)).